The sequence spans 466 residues: Benzoate transport protein (466 aa).

At 1 to 22 (MSREINVNQMIDDSKLTPFHWR) the chain is on the cytoplasmic side. A helical membrane pass occupies residues 23–43 (VIILSTLIIIFDGYDLVIYGV). Over 44 to 60 (ALPLLMKEWAIDPVTAG) the chain is Periplasmic. A helical transmembrane segment spans residues 61–81 (FIGSIALFGMMFGALIFGTIA). Over 82–93 (DKLEHLGVSRKK) the chain is Cytoplasmic. The helical transmembrane segment at 94 to 114 (VIAVCIILFSLCTVLCGFSET) threads the bilayer. Residues 115 to 119 (TTQFS) lie on the Periplasmic side of the membrane. The chain crosses the membrane as a helical span at residues 120–140 (IFRFLAGVGIGGVMPNVIALV). Residues 141 to 150 (SEYAPKKFKS) are Cytoplasmic-facing. Residues 151–171 (FFVTLMFSGYAIGGMTAAFLG) traverse the membrane as a helical segment. The Periplasmic portion of the chain corresponds to 172 to 181 (SILVPLYGWK). The chain crosses the membrane as a helical span at residues 182-202 (IMFMIAGIPLVLLLPLMKVLP). At 203–258 (ESIDYLVRKKKDETVRFIMTKMVPSYQYQPDHVFVLNSSNQNQAQAPVKMIFQEQR) the chain is on the cytoplasmic side. A helical membrane pass occupies residues 259–279 (AFSTMMFWCSIFMTLIMVYAL). The Periplasmic segment spans residues 280–297 (GNWLPKLMIEAGYNLSKS). The helical transmembrane segment at 298 to 318 (LIFLFSLNVGGMIGSILGGYL) threads the bilayer. Topologically, residues 319–325 (ADRYNVK) are cytoplasmic. A helical membrane pass occupies residues 326 to 346 (FVTMGLLLLGAISLSLLSFQF). Residues 347–348 (SS) lie on the Periplasmic side of the membrane. The helical transmembrane segment at 349 to 369 (VILYILIACAGAASIGAQIML) threads the bilayer. The Cytoplasmic portion of the chain corresponds to 370–387 (LAYMAKFYAPNVRSTGIG). A helical transmembrane segment spans residues 388-408 (WGLGMGRVGAILGPILTGWLL). The Periplasmic portion of the chain corresponds to 409 to 414 (SLQLPH). Residues 415–435 (FYNFLALSIPAVLGIVTVFLI) form a helical membrane-spanning segment. The Cytoplasmic portion of the chain corresponds to 436–466 (NDRRMYQPEPISPIANQNDTTTVKVNEAVSH).

This sequence belongs to the major facilitator superfamily. Aromatic acid:H(+) symporter (AAHS) (TC 2.A.1.15) family.

The protein resides in the cell inner membrane. In terms of biological role, probable uptake of benzoate. This Acinetobacter baylyi (strain ATCC 33305 / BD413 / ADP1) protein is Benzoate transport protein (benK).